Consider the following 835-residue polypeptide: MEPILINAQVQMWSAKAGMSKSRNALIETCVGKREVKLILYFSTGKIKTLQLHDNIKSVVLQTYGEDQNYLHLTFKNNDFLFVEKLTTTDARRLKRFLDKTSQGSIRPARSDERCGEPSTSAQELNGSGSSCETNSECFESPKESEMCMFRELSLLPSSSTFLHNVGLLENQFIKRKRFFSDLAKNEKQSNLKDSIRDFEANLVVCISNEKGKERNVREVDISKPGFGFPFETNYPEDSGVDVRDLNDLITKLFSPVLLETHCIENGLEWHEYMKTYLLYPEKLWQGLPNVGNTCYINVVLQSLCSIPLFINDLFNQGFPWIKAPKDDFNMLLMQLLVLKDIYNARFRQKLLIGITKALPIFGEIFAVDRQNDAHEFLSLCLVQLKETFQRVTMMWQSENDSGDFYLLKDIFADYATINKMPVCPVTNNFEFELLSSIFCKACGLTLFKGEPSRYLSINIPQGGKDMSIQSTLDLFFSAEELEHRCEKCLYNKSVSFHRFGRLPRVIIVHLKRYHFNESWVMKKDERPILVSKYLRLSCHCSKSTKPPPPLRPGEHVKNLDLLKPLEVLGSEILKLPFNSVRTSRSKGFETINITSNRESEAQSGKRVSEVLSGKVQQENSGKGDTAHIVGSELTKETEKLKKHEEEHRPSDLDSGSIREAQKYQQAEKCNEGRSDKQISLEALTQSRPKPISQEQTENLGKTTLSHTQDSSQSSQSSSDSSKSSRCSDDLDKKAKPTRKVDPTKLNKKEDNVYRLVNIINHIGNSPNGGHYINDAFDFKRQSWFTYSDLHVTRTQEDFVYRGRSSTGYVFFYMHNDIFEELLAKETQSTSTSKG.

The disordered stretch occupies residues 102–128; that stretch reads SQGSIRPARSDERCGEPSTSAQELNGS. Over residues 118 to 128 the composition is skewed to polar residues; that stretch reads PSTSAQELNGS. The USP domain occupies 286–816; sequence QGLPNVGNTC…TGYVFFYMHN (531 aa). Cysteine 295 serves as the catalytic Nucleophile. The segment at 597–747 is disordered; sequence NRESEAQSGK…TRKVDPTKLN (151 aa). Composition is skewed to basic and acidic residues over residues 634-652 and 669-679; these read LTKETEKLKKHEEEHRPSD and KCNEGRSDKQI. A compositionally biased stretch (polar residues) spans 683–708; that stretch reads ALTQSRPKPISQEQTENLGKTTLSHT. Residues 709-725 are compositionally biased toward low complexity; the sequence is QDSSQSSQSSSDSSKSS. The span at 726 to 747 shows a compositional bias: basic and acidic residues; the sequence is RCSDDLDKKAKPTRKVDPTKLN. Histidine 771 (proton acceptor) is an active-site residue.

It belongs to the peptidase C19 family. In terms of assembly, interacts with RING1.

The protein localises to the nucleus. Its subcellular location is the cytoplasm. It localises to the cytoskeleton. It is found in the flagellum axoneme. It catalyses the reaction Thiol-dependent hydrolysis of ester, thioester, amide, peptide and isopeptide bonds formed by the C-terminal Gly of ubiquitin (a 76-residue protein attached to proteins as an intracellular targeting signal).. Functionally, deubiquitinase regulating several biological processes through the deubiquitination of components of these processes. Involved in somatic cell reprogramming through the 'Lys-48'-linked deubiquitination and stabilization of CBX4 and CBX6, two components of the polycomb-repressive complex 1 (PRC1). Also deubiquitinates and probably stabilizes the androgen receptor (AR), regulating the androgen receptor signaling pathway. May play a role in spermatogenesis. The protein is Ubiquitin carboxyl-terminal hydrolase 26 of Mus musculus (Mouse).